Reading from the N-terminus, the 2488-residue chain is Neuron navigator 2 (2488 aa).

Residues glycine 85–glutamine 192 enclose the Calponin-homology (CH) domain. Composition is skewed to low complexity over residues glutamine 194–serine 204, glutamine 221–glutamine 247, and glutamine 255–lysine 267. Disordered stretches follow at residues glutamine 194–threonine 675 and threonine 706–threonine 727. Polar residues predominate over residues glycine 299–tyrosine 315. Residues serine 356 to serine 369 show a composition bias toward low complexity. Over residues lysine 384–methionine 396 the composition is skewed to polar residues. The segment covering proline 401–threonine 410 has biased composition (pro residues). The segment covering arginine 492 to lysine 506 has biased composition (polar residues). Residues leucine 498 to alanine 531 are a coiled coil. Basic and acidic residues predominate over residues glycine 507 to proline 547. The segment covering methionine 592–serine 606 has biased composition (low complexity). Residues glycine 615 to proline 626 show a composition bias toward polar residues. Low complexity-rich tracts occupy residues serine 633–serine 642 and serine 657–threonine 675. Positions threonine 706–valine 719 are enriched in polar residues. The stretch at glutamate 743–glutamine 771 forms a coiled coil. Disordered stretches follow at residues leucine 804–glycine 824, leucine 939–serine 1151, lysine 1177–aspartate 1200, tyrosine 1213–glutamate 1283, proline 1295–threonine 1338, methionine 1355–serine 1412, serine 1440–lysine 1460, valine 1473–proline 1560, and serine 1591–aspartate 1629. Positions leucine 939–serine 985 are enriched in low complexity. The segment covering lysine 1091–arginine 1102 has biased composition (basic and acidic residues). The span at proline 1130–serine 1142 shows a compositional bias: polar residues. The segment covering serine 1220–serine 1245 has biased composition (low complexity). A compositionally biased stretch (polar residues) spans proline 1299–glutamine 1309. Composition is skewed to low complexity over residues serine 1363 to serine 1380 and serine 1388 to serine 1404. The segment covering serine 1440–isoleucine 1456 has biased composition (polar residues). Residues leucine 1477–proline 1489 show a composition bias toward low complexity. Serine 1480, serine 1484, and serine 1488 each carry phosphoserine. 2 stretches are compositionally biased toward basic and acidic residues: residues arginine 1498–threonine 1510 and threonine 1526–arginine 1535. Positions serine 1549–proline 1560 are enriched in low complexity. Residues glutamate 1686–valine 1773 adopt a coiled-coil conformation. 2 disordered regions span residues alanine 1790–serine 1887 and alanine 1951–serine 1985. 3 stretches are compositionally biased toward polar residues: residues serine 1800–glutamate 1820, asparagine 1875–serine 1887, and glutamate 1959–serine 1985. A coiled-coil region spans residues methionine 1897–glycine 1964. The residue at position 1977 (serine 1977) is a Phosphoserine. ATP is bound at residue glycine 2157–threonine 2164. The interval aspartate 2423–leucine 2488 is disordered. Residues tyrosine 2460–asparagine 2473 show a composition bias toward low complexity.

This sequence belongs to the Nav/unc-53 family. Highly expressed in the brain, kidney and liver. Also expressed in the thyroid, mammary gland, spinal cord, heart, placenta and lung. Abundantly expressed in colon cancers.

The protein resides in the nucleus. It carries out the reaction ATP + H2O = ADP + phosphate + H(+). Functionally, possesses 3' to 5' helicase activity and exonuclease activity. Involved in neuronal development, specifically in the development of different sensory organs. The sequence is that of Neuron navigator 2 (NAV2) from Homo sapiens (Human).